The sequence spans 953 residues: UvrABC system protein A (953 aa).

33–40 (GLSGSGKS) contacts ATP. ABC transporter domains are found at residues 320–599 (WGST…EESI) and 619–949 (GHDN…RYLK). ATP is bound at residue 652-659 (GVSGSGKS). The C4-type zinc-finger motif lies at 752 to 778 (CEACQGDGLIKIEMHFLPDVYVKCDIC).

This sequence belongs to the ABC transporter superfamily. UvrA family. In terms of assembly, forms a heterotetramer with UvrB during the search for lesions.

The protein resides in the cytoplasm. The UvrABC repair system catalyzes the recognition and processing of DNA lesions. UvrA is an ATPase and a DNA-binding protein. A damage recognition complex composed of 2 UvrA and 2 UvrB subunits scans DNA for abnormalities. When the presence of a lesion has been verified by UvrB, the UvrA molecules dissociate. This is UvrABC system protein A from Rickettsia typhi (strain ATCC VR-144 / Wilmington).